Reading from the N-terminus, the 227-residue chain is Cytochrome c oxidase subunit 2 (227 aa).

At 1 to 14 (MAYPLQLGFQDATS) the chain is on the mitochondrial intermembrane side. The chain crosses the membrane as a helical span at residues 15-45 (PVMEELLHFHDHTLMIIFLISSLVLYIIMLM). The Mitochondrial matrix segment spans residues 46–59 (LTTKLVHTNMMNVQ). A helical membrane pass occupies residues 60–87 (EMEMIWTILPAIILILIALPSLHTLYMM). At 88-227 (DEINNPLLTI…YFESWSASLA (140 aa)) the chain is on the mitochondrial intermembrane side. Cu cation is bound by residues H161, C196, E198, C200, H204, and M207. E198 is a binding site for Mg(2+). Y218 carries the phosphotyrosine modification.

The protein belongs to the cytochrome c oxidase subunit 2 family. As to quaternary structure, component of the cytochrome c oxidase (complex IV, CIV), a multisubunit enzyme composed of 14 subunits. The complex is composed of a catalytic core of 3 subunits MT-CO1, MT-CO2 and MT-CO3, encoded in the mitochondrial DNA, and 11 supernumerary subunits COX4I, COX5A, COX5B, COX6A, COX6B, COX6C, COX7A, COX7B, COX7C, COX8 and NDUFA4, which are encoded in the nuclear genome. The complex exists as a monomer or a dimer and forms supercomplexes (SCs) in the inner mitochondrial membrane with NADH-ubiquinone oxidoreductase (complex I, CI) and ubiquinol-cytochrome c oxidoreductase (cytochrome b-c1 complex, complex III, CIII), resulting in different assemblies (supercomplex SCI(1)III(2)IV(1) and megacomplex MCI(2)III(2)IV(2)). Found in a complex with TMEM177, COA6, COX18, COX20, SCO1 and SCO2. Interacts with TMEM177 in a COX20-dependent manner. Interacts with COX20. Interacts with COX16. Cu cation serves as cofactor.

It localises to the mitochondrion inner membrane. The enzyme catalyses 4 Fe(II)-[cytochrome c] + O2 + 8 H(+)(in) = 4 Fe(III)-[cytochrome c] + 2 H2O + 4 H(+)(out). Functionally, component of the cytochrome c oxidase, the last enzyme in the mitochondrial electron transport chain which drives oxidative phosphorylation. The respiratory chain contains 3 multisubunit complexes succinate dehydrogenase (complex II, CII), ubiquinol-cytochrome c oxidoreductase (cytochrome b-c1 complex, complex III, CIII) and cytochrome c oxidase (complex IV, CIV), that cooperate to transfer electrons derived from NADH and succinate to molecular oxygen, creating an electrochemical gradient over the inner membrane that drives transmembrane transport and the ATP synthase. Cytochrome c oxidase is the component of the respiratory chain that catalyzes the reduction of oxygen to water. Electrons originating from reduced cytochrome c in the intermembrane space (IMS) are transferred via the dinuclear copper A center (CU(A)) of subunit 2 and heme A of subunit 1 to the active site in subunit 1, a binuclear center (BNC) formed by heme A3 and copper B (CU(B)). The BNC reduces molecular oxygen to 2 water molecules using 4 electrons from cytochrome c in the IMS and 4 protons from the mitochondrial matrix. The protein is Cytochrome c oxidase subunit 2 (MT-CO2) of Mammuthus primigenius (Siberian woolly mammoth).